Reading from the N-terminus, the 382-residue chain is ATP phosphoribosyltransferase regulatory subunit (382 aa).

The protein belongs to the class-II aminoacyl-tRNA synthetase family. HisZ subfamily. As to quaternary structure, heteromultimer composed of HisG and HisZ subunits.

Its subcellular location is the cytoplasm. It participates in amino-acid biosynthesis; L-histidine biosynthesis; L-histidine from 5-phospho-alpha-D-ribose 1-diphosphate: step 1/9. Its function is as follows. Required for the first step of histidine biosynthesis. May allow the feedback regulation of ATP phosphoribosyltransferase activity by histidine. This chain is ATP phosphoribosyltransferase regulatory subunit, found in Burkholderia ambifaria (strain ATCC BAA-244 / DSM 16087 / CCUG 44356 / LMG 19182 / AMMD) (Burkholderia cepacia (strain AMMD)).